The following is a 544-amino-acid chain: MAKDIKFSEDARSLMLQGVDKLANAVKITLGPKGRNVVLEKKFGSPLITNDGVTIAKEIELENPYENMGAKLVAEVASKTNEIAGDGTTTATVLAQAIIREGLKNVTAGANPVGIRKGIDKAVAAALTELHTISRPVSNKDEIAQVAAISAADDEVGQLIAEAMERVGNDGVITIEESKGFTTELDVVEGMQFDRGYASHYMVTDTDKMEAVLDNPYILITDKKITNIQEVLPLLEQVVQQGRPLLIIAEDVEGEALATLVVNKLRGTFNAVAVKAPGFGDRRKAMLEDIAILTGGQVITEELGLDLKSADISSLGRAAKVVVTKDNTTIVEGVGGADAIEARIGQIRAQLAETTSEFDKEKLQERLAKLAGGVAVIKVGAATETELKERKLRIEDALNSTRAAVEEGIVSGGGTALLNVYAAVEKVSESEEGDVATGVKIVLRALEEPVRQIANNAGLEGSIIVDRLKREEIGIGFNAATGEWVNMMEAGVVDPAKVTRSALQNAASVAALFLTTEAVVADIPEPAGAGMPDMSGMGGMPGMM.

ATP is bound by residues 29–32, 86–90, glycine 413, 478–480, and aspartate 494; these read TLGP, DGTTT, and NAA.

This sequence belongs to the chaperonin (HSP60) family. Forms a cylinder of 14 subunits composed of two heptameric rings stacked back-to-back. Interacts with the co-chaperonin GroES.

The protein localises to the cytoplasm. It carries out the reaction ATP + H2O + a folded polypeptide = ADP + phosphate + an unfolded polypeptide.. Together with its co-chaperonin GroES, plays an essential role in assisting protein folding. The GroEL-GroES system forms a nano-cage that allows encapsulation of the non-native substrate proteins and provides a physical environment optimized to promote and accelerate protein folding. The chain is Chaperonin GroEL from Lysinibacillus sphaericus (strain C3-41).